Here is a 396-residue protein sequence, read N- to C-terminus: Phosphoglycerate kinase (396 aa).

Substrate contacts are provided by residues 21–23 (DFN), Arg36, 59–62 (HLGK), Arg119, and Arg156. Residues Lys206, Gly294, Glu325, and 352–355 (GGDS) contribute to the ATP site.

This sequence belongs to the phosphoglycerate kinase family. Monomer.

It localises to the cytoplasm. It carries out the reaction (2R)-3-phosphoglycerate + ATP = (2R)-3-phospho-glyceroyl phosphate + ADP. It functions in the pathway carbohydrate degradation; glycolysis; pyruvate from D-glyceraldehyde 3-phosphate: step 2/5. This is Phosphoglycerate kinase from Staphylococcus aureus (strain USA300).